The sequence spans 214 residues: LOB domain-containing protein 7 (214 aa).

One can recognise an LOB domain in the interval 12-113 (TACAACKHQR…TELNLTRQQI (102 aa)).

Belongs to the LOB domain-containing protein family.

The polypeptide is LOB domain-containing protein 7 (LBD7) (Arabidopsis thaliana (Mouse-ear cress)).